Consider the following 268-residue polypeptide: Undecaprenyl-diphosphatase 1 (268 aa).

A run of 7 helical transmembrane segments spans residues 5 to 25, 43 to 63, 84 to 104, 107 to 127, 184 to 204, 218 to 238, and 247 to 267; these read SIISALLLGIIEGLTEFIPVS, GNTFAVLIQLGAILAILLVYF, LAVLVAFLPAAVIGALAHDFI, VLFETPMLICVVLIIGGFILL, AAEFSFFLAMPTMLGAFVLDL, LIAVGFVAAFVSGLFVVRSLL, and APFAWWRIVIGALGLVALLVI.

It belongs to the UppP family.

It is found in the cell inner membrane. The enzyme catalyses di-trans,octa-cis-undecaprenyl diphosphate + H2O = di-trans,octa-cis-undecaprenyl phosphate + phosphate + H(+). In terms of biological role, catalyzes the dephosphorylation of undecaprenyl diphosphate (UPP). Confers resistance to bacitracin. The polypeptide is Undecaprenyl-diphosphatase 1 (Agrobacterium fabrum (strain C58 / ATCC 33970) (Agrobacterium tumefaciens (strain C58))).